A 901-amino-acid polypeptide reads, in one-letter code: MAEVTVKSLAAEIQTSVERLVQQLADAGINKSPDDSVSPQEREALLAHLNREHGGSSDKLTLQRKTRSTLSVPGTGGKSKSVQIEVRKKRTYVKSDAAAQQAEAEALAKREAEEQVKREAEEQTQRDMAELAKREAAEQAKRQQEEQAKREAAEKAKREAAEKEKVTNQHIDEKTKAAQAEKAKREAEAAELKRKAEEEARRKLEEDARKVAEEARRMAEANEGKWTENASEEDNSDYHVTTSHHAREAEDENDRQVEGDRRARGRGGKAAKQKKGSKLSESKADREEARAVNRGGKGGKRKPSSLQQGFTKPAQAVNRDVVIGETITVAELANKMAVKGSQVIKAMMKMGAMATINQVIDQETAQLVAEDMGHKVILRRENELEEAVLSDRDTGAAAEPRAPVVTIMGHVDHGKTSLLDYIRSTKVAAGEAGGITQHIGAYHVQTDNGMITFLDTPGHAAFTAMRARGAQATDIVVLVVAADDGVMPQTIEAVQHAKAAGVPLVVAVNKIDKPEADPDRVKNELSQYGVMPEEWGGEAQFVHVSAKAGTGIDELLDAILLQAEVLELKAVRNGMASGVVIESFLDKGRGPVATVLVREGTLNKGDIVLCGFEYGRVRAMRDELGREITEAGPSIPVEILGMSGVPAAGDEATVVRDEKKAREVALYRQGKFREVKLARQQKAKLENMFSNMVEGEVSELNIVLKADVQGSVEAIADSLRKLSTDEVKVKIVGSGVGGITETDATLAAASNAILLGFNVRADASARRVVEAENLDLRYYSVIYDLIDEVKQAMSGMLAPEYKQEIIGLAEVRDVFKSPKFGAIAGCMVTEGVVKRHSPIRVLRENVVIYEGELESLRRFKDDVNEVRNGMECGIGVKNYNDVRPGDVIEVFETIEVKRTID.

The segment at 48-313 (HLNREHGGSS…SSLQQGFTKP (266 aa)) is disordered. Over residues 68 to 82 (STLSVPGTGGKSKSV) the composition is skewed to polar residues. A compositionally biased stretch (basic and acidic residues) spans 106–226 (ALAKREAEEQ…RMAEANEGKW (121 aa)). Residues 263-277 (ARGRGGKAAKQKKGS) are compositionally biased toward basic residues. Over residues 278-291 (KLSESKADREEARA) the composition is skewed to basic and acidic residues. One can recognise a tr-type G domain in the interval 400 to 569 (PRAPVVTIMG…LLQAEVLELK (170 aa)). Residues 409-416 (GHVDHGKT) form a G1 region. 409-416 (GHVDHGKT) contributes to the GTP binding site. Positions 434–438 (GITQH) are G2. Residues 455–458 (DTPG) are G3. GTP is bound by residues 455-459 (DTPGH) and 509-512 (NKID). The segment at 509–512 (NKID) is G4. Residues 545–547 (SAK) form a G5 region.

It belongs to the TRAFAC class translation factor GTPase superfamily. Classic translation factor GTPase family. IF-2 subfamily.

Its subcellular location is the cytoplasm. In terms of biological role, one of the essential components for the initiation of protein synthesis. Protects formylmethionyl-tRNA from spontaneous hydrolysis and promotes its binding to the 30S ribosomal subunits. Also involved in the hydrolysis of GTP during the formation of the 70S ribosomal complex. The protein is Translation initiation factor IF-2 of Edwardsiella ictaluri (strain 93-146).